A 1047-amino-acid polypeptide reads, in one-letter code: Protein masquerade (1047 aa).

Residues 1-30 (MPRHSSTMSRLVLPLIFSILLVSKPSPSQA) form the signal peptide. Residues 54-87 (KDCPGVCVHTLATLICYEVLDDVACPSPSMKCCI) are CLIP 1. 3 disulfide bridges follow: Cys56–Cys85, Cys60–Cys78, and Cys69–Cys86. Asn95 carries N-linked (GlcNAc...) asparagine glycosylation. Composition is skewed to low complexity over residues 98 to 139 (AVRA…STTP) and 148 to 175 (KRPA…VATA). The interval 98-189 (AVRATTTPKT…KEEATKADDA (92 aa)) is disordered. Over residues 176 to 189 (KPKDKEEATKADDA) the composition is skewed to basic and acidic residues. Residues 192 to 224 (DCTGVCVADRIAEYCEAYLTSDGLCKEGTKCCV) form a CLIP 2 region. 3 cysteine pairs are disulfide-bonded: Cys193-Cys222, Cys197-Cys216, and Cys206-Cys223. Residue Asn251 is glycosylated (N-linked (GlcNAc...) asparagine). Residues 252–335 (QTLSEKSAPA…PLSNKLKSGQ (84 aa)) form a disordered region. Positions 263–280 (SSSTSTTSTTTTTSTTTT) are enriched in low complexity. N-linked (GlcNAc...) asparagine glycosylation occurs at Asn287. Residues 307 to 325 (AAEEEEEQETEEDGEEEEP) show a composition bias toward acidic residues. Positions 343–374 (ECEGECMNGIFAIFCDDIDSDAFCPGEESCCV) are CLIP 3. Disulfide bonds link Cys344–Cys372, Cys348–Cys366, and Cys357–Cys373. A disordered region spans residues 376 to 428 (GGASEATPSSKAPPTKPAIKHAPKPAAKPARPASPPPAPPSSTSGGGGGGDFL). A CLIP 4 region spans residues 457–492 (RCPGFCLLNIMAAFCERPSVLVSTPTTCAKGSVCCD). 3 disulfides stabilise this stretch: Cys458–Cys490, Cys462–Cys484, and Cys471–Cys491. Residues 498–527 (APKPKLPPPTPSPTASPTAPPYVLPNTPSP) are disordered. Residues 501–527 (PKLPPPTPSPTASPTAPPYVLPNTPSP) show a composition bias toward pro residues. The tract at residues 532–567 (ECPGSCIVSLLSFTCFKNAEMTDLFRCKRSGQICCA) is CLIP 5. 3 disulfide bridges follow: Cys533-Cys565, Cys537-Cys558, and Cys546-Cys566. Residue Asn582 is glycosylated (N-linked (GlcNAc...) asparagine). The disordered stretch occupies residues 583–673 (DTAYYPAPPP…TTTTTTTTPR (91 aa)). Composition is skewed to pro residues over residues 588-606 (PAPP…PQTP), 613-638 (NPPP…PPAP), and 650-661 (GLPPQPQPPMTT). Residues 662 to 672 (PPTTTTTTTTP) are compositionally biased toward low complexity. Cystine bridges form between Cys682–Cys916, Cys829–Cys845, Cys930–Cys1001, Cys961–Cys981, and Cys991–Cys1019. N-linked (GlcNAc...) asparagine glycosylation is found at Asn726 and Asn794. Residues 803-1043 (VVGGEDGENG…FIGWINQIIS (241 aa)) form a peptidase S1 region.

This sequence belongs to the peptidase S1 family. CLIP subfamily. Post-translationally, proteolytically cleaved and thereafter secreted.

The protein localises to the secreted. It localises to the cell projection. It is found in the axon. Its function is as follows. In embryogenesis, has a role in somatic muscle attachment and in the development of axonal pathways probably by stabilizing cell-matrix adhesion and/or by acting as a competitive antagonist of serine proteases. The polypeptide is Protein masquerade (Drosophila melanogaster (Fruit fly)).